The primary structure comprises 97 residues: Aspartyl/glutamyl-tRNA(Asn/Gln) amidotransferase subunit C (97 aa).

It belongs to the GatC family. In terms of assembly, heterotrimer of A, B and C subunits.

It carries out the reaction L-glutamyl-tRNA(Gln) + L-glutamine + ATP + H2O = L-glutaminyl-tRNA(Gln) + L-glutamate + ADP + phosphate + H(+). The catalysed reaction is L-aspartyl-tRNA(Asn) + L-glutamine + ATP + H2O = L-asparaginyl-tRNA(Asn) + L-glutamate + ADP + phosphate + 2 H(+). Allows the formation of correctly charged Asn-tRNA(Asn) or Gln-tRNA(Gln) through the transamidation of misacylated Asp-tRNA(Asn) or Glu-tRNA(Gln) in organisms which lack either or both of asparaginyl-tRNA or glutaminyl-tRNA synthetases. The reaction takes place in the presence of glutamine and ATP through an activated phospho-Asp-tRNA(Asn) or phospho-Glu-tRNA(Gln). This is Aspartyl/glutamyl-tRNA(Asn/Gln) amidotransferase subunit C from Thermosynechococcus vestitus (strain NIES-2133 / IAM M-273 / BP-1).